We begin with the raw amino-acid sequence, 722 residues long: Threonine--tRNA ligase 1, cytoplasmic (722 aa).

A compositionally biased stretch (polar residues) spans 1 to 10 (MSQEKASSPS). The segment at 1–48 (MSQEKASSPSGKMDGEKPVDASEEKRKEGGKKKSKDGGGDGGRAELNP) is disordered. The segment covering 13-27 (MDGEKPVDASEEKRK) has biased composition (basic and acidic residues). The TGS domain occupies 78-142 (DSKPIKVTLP…ETDCTLELLK (65 aa)). The residue at position 242 (K242) is an N6-acetyllysine. Phosphothreonine is present on T245. A Phosphotyrosine modification is found at Y297. A Phosphothreonine modification is found at T452.

This sequence belongs to the class-II aminoacyl-tRNA synthetase family. In terms of assembly, homodimer. In terms of processing, ISGylated.

The protein resides in the cytoplasm. The enzyme catalyses tRNA(Thr) + L-threonine + ATP = L-threonyl-tRNA(Thr) + AMP + diphosphate + H(+). In terms of biological role, catalyzes the attachment of threonine to tRNA(Thr) in a two-step reaction: threonine is first activated by ATP to form Thr-AMP and then transferred to the acceptor end of tRNA(Thr). Also edits incorrectly charged tRNA(Thr) via its editing domain, at the post-transfer stage. This Mus musculus (Mouse) protein is Threonine--tRNA ligase 1, cytoplasmic (Tars1).